Reading from the N-terminus, the 440-residue chain is FAD-dependent monooxygenase FVEG_08293 (440 aa).

A helical membrane pass occupies residues 7 to 26 (EFNVAIVGAGVAGLALAMAL). Residues E37 and G50 each coordinate FAD. N-linked (GlcNAc...) asparagine glycosylation is present at N77. FAD is bound at residue R122. Residues R203 and Y235 contribute to the active site. 2 residues coordinate FAD: D317 and A330.

It belongs to the paxM FAD-dependent monooxygenase family. The cofactor is FAD.

It localises to the membrane. Functionally, FAD-dependent monooxygenase; part of the Fusarium detoxification of benzoxazolinone cluster 1 (FDB1) involved in the degradation of benzoxazolinones produced by the host plant. Maize, wheat, and rye produce the 2 benzoxazinone phytoanticipins 2,4-dihy-droxy-7-methoxy-1,4-benzoxazin-3-one (DIMBOA) and 2,4-dihydroxy-1,4-benzoxazin-3-one (DIBOA) that, due to their inherent instability once released, spontaneously degrade to the more stable corresponding benzoxazolinones, 6-methoxy-2-benzoxazolinone (MBOA) and 2-benzoxazolinone (BOA), respectively. The first step in the detoxification of benzoxazolinones involves the hydrolysis of the cyclic ester bond of benzoxazolinones by the FDB1 cluster gamma-lactamase MBL1 to aminophenols. MBL1 is able to convert BOA into 2-aminophenol (2-AP), as well as MBOA into 5-methoxy-2-aminophenol (2-AMP). The FDB2 cluster N-malonyltransferase FDB2/NAT1 then metabolizes aminophenols via N-malonylation to non-toxic malonamic acids. FDB2/NAT1 converts 2-AP into N-(2-hydroxyphenyl) malonamic acid (HPMA) and 2-AMP into N-(2-hydroxy-4-methoxyphenyl) malonamic acid (HMPMA). The duplicated dienlactone hydrolases DLH1 and DLH2 may provide redundant function for hydrolyzing the lactone moiety in the BOA molecule. The roles of the amidases an other enzymes encoded by the 2 FDB clusters have not been identified so far. The protein is FAD-dependent monooxygenase FVEG_08293 of Gibberella moniliformis (strain M3125 / FGSC 7600) (Maize ear and stalk rot fungus).